Consider the following 60-residue polypeptide: Large ribosomal subunit protein uL30 (60 aa).

Belongs to the universal ribosomal protein uL30 family. As to quaternary structure, part of the 50S ribosomal subunit.

The sequence is that of Large ribosomal subunit protein uL30 from Limosilactobacillus fermentum (strain NBRC 3956 / LMG 18251) (Lactobacillus fermentum).